The chain runs to 385 residues: Phosphatidate cytidylyltransferase, mitochondrial (385 aa).

This sequence belongs to the TAM41 family. The cofactor is Mg(2+). It depends on Co(2+) as a cofactor. Cu(2+) serves as cofactor.

It localises to the mitochondrion inner membrane. The enzyme catalyses a 1,2-diacyl-sn-glycero-3-phosphate + CTP + H(+) = a CDP-1,2-diacyl-sn-glycerol + diphosphate. The protein operates within phospholipid metabolism; CDP-diacylglycerol biosynthesis; CDP-diacylglycerol from sn-glycerol 3-phosphate: step 3/3. Catalyzes the formation of CDP-diacylglycerol (CDP-DAG) from phosphatidic acid (PA) in the mitochondrial inner membrane. Required for the biosynthesis of the dimeric phospholipid cardiolipin, which stabilizes supercomplexes of the mitochondrial respiratory chain in the mitochondrial inner membrane. This is Phosphatidate cytidylyltransferase, mitochondrial (TAM41) from Saccharomyces cerevisiae (strain ATCC 204508 / S288c) (Baker's yeast).